A 518-amino-acid polypeptide reads, in one-letter code: ETHYLENE INSENSITIVE 3-like 2 protein (518 aa).

The stretch at 37–73 forms a coiled coil; it reads DDLSSDEEMEIEELEKKIWRDKQRLKRLKEMAKNGLG. A disordered region spans residues 450–518; that stretch reads FNHPNDLYRP…GQELPTSWIQ (69 aa). Composition is skewed to polar residues over residues 475–484 and 500–518; these read PSPSTLNQNL and GTENNLHNQGQELPTSWIQ.

This sequence belongs to the EIN3 family. In terms of assembly, acts as a homodimer to bind the primary ethylene response element.

The protein resides in the nucleus. Probable transcription factor acting as a positive regulator in the ethylene response pathway. Could bind the primary ethylene response element present in the ETHYLENE-RESPONSE-FACTOR1 promoter. This Arabidopsis thaliana (Mouse-ear cress) protein is ETHYLENE INSENSITIVE 3-like 2 protein (EIL2).